A 225-amino-acid polypeptide reads, in one-letter code: Membrin-11 (225 aa).

Ala2 is subject to N-acetylalanine. Residues 2–200 are Cytoplasmic-facing; sequence ASGIVEGGGS…VLRLIERRNR (199 aa). Residues 201–221 traverse the membrane as a helical; Anchor for type IV membrane protein segment; it reads VDTWIKYAGMIATLVILYLFI. The Vesicular segment spans residues 222–225; that stretch reads RWTR.

The protein belongs to the GOSR2 family.

The protein resides in the golgi apparatus membrane. Its function is as follows. Involved in transport of proteins from the cis/medial-Golgi to the trans-Golgi network. This Arabidopsis thaliana (Mouse-ear cress) protein is Membrin-11 (MEMB11).